Reading from the N-terminus, the 341-residue chain is HTH-type transcriptional repressor PurR (341 aa).

Positions 2-56 (ATIKDVAKHAGVSTTTVSHVINKTRFVAENTKAAVWAAIKELHYSPSAVARSLKV) constitute an HTH lacI-type domain. The segment at residues 4 to 23 (IKDVAKHAGVSTTTVSHVIN) is a DNA-binding region (H-T-H motif). The DNA-binding element occupies 48 to 56 (SAVARSLKV). Residues tyrosine 73, arginine 190, threonine 192, and aspartate 275 each coordinate hypoxanthine.

Homodimer.

Its pathway is purine metabolism; purine nucleotide biosynthesis [regulation]. Functionally, is the main repressor of the genes involved in the de novo synthesis of purine nucleotides, regulating purB, purC, purEK, purF, purHD, purL, purMN and guaBA expression. PurR is allosterically activated to bind its cognate DNA by binding the purine corepressors, hypoxanthine or guanine, thereby effecting transcription repression. In Yersinia pestis bv. Antiqua (strain Antiqua), this protein is HTH-type transcriptional repressor PurR.